An 82-amino-acid chain; its full sequence is Small ribosomal subunit protein bS18 (82 aa).

A disordered region spans residues 1-20 (MVDINQIPTRRPFHRRRKTC).

Belongs to the bacterial ribosomal protein bS18 family. In terms of assembly, part of the 30S ribosomal subunit. Forms a tight heterodimer with protein bS6.

In terms of biological role, binds as a heterodimer with protein bS6 to the central domain of the 16S rRNA, where it helps stabilize the platform of the 30S subunit. This chain is Small ribosomal subunit protein bS18, found in Brucella abortus (strain 2308).